We begin with the raw amino-acid sequence, 151 residues long: 3-dehydroquinate dehydratase (151 aa).

Catalysis depends on Tyr-26, which acts as the Proton acceptor. Substrate contacts are provided by Asn-75, His-81, and Asp-88. The Proton donor role is filled by His-101. Substrate is bound by residues 102–103 (LS) and Arg-112.

It belongs to the type-II 3-dehydroquinase family. Homododecamer.

It carries out the reaction 3-dehydroquinate = 3-dehydroshikimate + H2O. It functions in the pathway metabolic intermediate biosynthesis; chorismate biosynthesis; chorismate from D-erythrose 4-phosphate and phosphoenolpyruvate: step 3/7. Its function is as follows. Catalyzes a trans-dehydration via an enolate intermediate. The protein is 3-dehydroquinate dehydratase of Shewanella denitrificans (strain OS217 / ATCC BAA-1090 / DSM 15013).